A 193-amino-acid polypeptide reads, in one-letter code: ATP synthase subunit b (193 aa).

Residues 24–44 (PLAELIVGLLAFGLLVGFFFW) form a helical membrane-spanning segment.

It belongs to the ATPase B chain family. As to quaternary structure, F-type ATPases have 2 components, F(1) - the catalytic core - and F(0) - the membrane proton channel. F(1) has five subunits: alpha(3), beta(3), gamma(1), delta(1), epsilon(1). F(0) has three main subunits: a(1), b(2) and c(10-14). The alpha and beta chains form an alternating ring which encloses part of the gamma chain. F(1) is attached to F(0) by a central stalk formed by the gamma and epsilon chains, while a peripheral stalk is formed by the delta and b chains.

The protein localises to the cell membrane. Its function is as follows. F(1)F(0) ATP synthase produces ATP from ADP in the presence of a proton or sodium gradient. F-type ATPases consist of two structural domains, F(1) containing the extramembraneous catalytic core and F(0) containing the membrane proton channel, linked together by a central stalk and a peripheral stalk. During catalysis, ATP synthesis in the catalytic domain of F(1) is coupled via a rotary mechanism of the central stalk subunits to proton translocation. Component of the F(0) channel, it forms part of the peripheral stalk, linking F(1) to F(0). The chain is ATP synthase subunit b from Parafrankia sp. (strain EAN1pec).